The sequence spans 166 residues: Ribosome maturation factor RimM (166 aa).

The PRC barrel domain maps to 94-166 (EGEYYHADLI…IVIEAAYADQ (73 aa)).

Belongs to the RimM family. Binds ribosomal protein uS19.

It localises to the cytoplasm. Functionally, an accessory protein needed during the final step in the assembly of 30S ribosomal subunit, possibly for assembly of the head region. Essential for efficient processing of 16S rRNA. May be needed both before and after RbfA during the maturation of 16S rRNA. It has affinity for free ribosomal 30S subunits but not for 70S ribosomes. This chain is Ribosome maturation factor RimM, found in Novosphingobium aromaticivorans (strain ATCC 700278 / DSM 12444 / CCUG 56034 / CIP 105152 / NBRC 16084 / F199).